The sequence spans 176 residues: Photosystem I assembly protein Ycf4 (176 aa).

A run of 2 helical transmembrane segments spans residues 22–42 (FVWA…GTAS) and 48–68 (LIAF…GLFI).

It belongs to the Ycf4 family.

It is found in the plastid thylakoid membrane. Seems to be required for the assembly of the photosystem I complex. The polypeptide is Photosystem I assembly protein Ycf4 (Cuscuta gronovii (Common dodder)).